The chain runs to 445 residues: Ribosomal protein uS12 methylthiotransferase RimO (445 aa).

The 116-residue stretch at 4–119 folds into the MTTase N-terminal domain; that stretch reads YKVGMVSLGC…INEAIMNFIN (116 aa). Residues C13, C48, C82, C157, C161, and C164 each coordinate [4Fe-4S] cluster. The 231-residue stretch at 143–373 folds into the Radical SAM core domain; that stretch reads TTDKATAYLR…MLLQKEVSEE (231 aa). The TRAM domain maps to 376 to 441; it reads KNKVGREYDV…EYDLVGVVCN (66 aa).

Belongs to the methylthiotransferase family. RimO subfamily. The cofactor is [4Fe-4S] cluster.

It localises to the cytoplasm. The enzyme catalyses L-aspartate(89)-[ribosomal protein uS12]-hydrogen + (sulfur carrier)-SH + AH2 + 2 S-adenosyl-L-methionine = 3-methylsulfanyl-L-aspartate(89)-[ribosomal protein uS12]-hydrogen + (sulfur carrier)-H + 5'-deoxyadenosine + L-methionine + A + S-adenosyl-L-homocysteine + 2 H(+). In terms of biological role, catalyzes the methylthiolation of an aspartic acid residue of ribosomal protein uS12. This chain is Ribosomal protein uS12 methylthiotransferase RimO, found in Clostridium perfringens (strain 13 / Type A).